A 352-amino-acid chain; its full sequence is Protein RecA (352 aa).

ATP is bound at residue 67–74 (GPESSGKT). The disordered stretch occupies residues 330–352 (STPKPEAESQEKAAAAQDDDSLV).

It belongs to the RecA family.

It localises to the cytoplasm. Its function is as follows. Can catalyze the hydrolysis of ATP in the presence of single-stranded DNA, the ATP-dependent uptake of single-stranded DNA by duplex DNA, and the ATP-dependent hybridization of homologous single-stranded DNAs. It interacts with LexA causing its activation and leading to its autocatalytic cleavage. This Chromohalobacter salexigens (strain ATCC BAA-138 / DSM 3043 / CIP 106854 / NCIMB 13768 / 1H11) protein is Protein RecA.